The following is a 301-amino-acid chain: Sulfate adenylyltransferase subunit 2 (301 aa).

The disordered stretch occupies residues 282-301; it reads RLIDRDEAGSMEKKKREGYF.

Belongs to the PAPS reductase family. CysD subfamily. As to quaternary structure, heterodimer composed of CysD, the smaller subunit, and CysN.

The catalysed reaction is sulfate + ATP + H(+) = adenosine 5'-phosphosulfate + diphosphate. Its pathway is sulfur metabolism; hydrogen sulfide biosynthesis; sulfite from sulfate: step 1/3. With CysN forms the ATP sulfurylase (ATPS) that catalyzes the adenylation of sulfate producing adenosine 5'-phosphosulfate (APS) and diphosphate, the first enzymatic step in sulfur assimilation pathway. APS synthesis involves the formation of a high-energy phosphoric-sulfuric acid anhydride bond driven by GTP hydrolysis by CysN coupled to ATP hydrolysis by CysD. The sequence is that of Sulfate adenylyltransferase subunit 2 from Chelativorans sp. (strain BNC1).